The sequence spans 469 residues: Tubulin gamma-1 chain (469 aa).

142-148 lines the GTP pocket; that stretch reads AGGTGSG.

The protein belongs to the tubulin family.

The protein localises to the cytoplasm. The protein resides in the cytoskeleton. It is found in the microtubule organizing center. In terms of biological role, tubulin is the major constituent of microtubules. The gamma chain is found at microtubule organizing centers (MTOC) such as the spindle poles, suggesting that it is involved in the minus-end nucleation of microtubule assembly. This is Tubulin gamma-1 chain (TUBG1) from Zea mays (Maize).